The chain runs to 199 residues: MARILVLKSSINGSQSQTSTLIDTFLAERQANGHADDVIVRNLVDADLPMLDSELFHALRGAANPSERAQRAIVLSDELIAELKGSDLLLIGAPMYNLNVPTQLKNWFDLVARARVTFRYTETYPVGLVEGISAIVFSSRGGVHVGQDTDAVTPYLRAVLGLMGIVDVEFVYAEGLDMKPHGFDAGLADARRQMDALHA.

FMN-binding positions include S10, 95–98 (MYNL), and 139–142 (SRGG).

Belongs to the azoreductase type 1 family. In terms of assembly, homodimer. Requires FMN as cofactor.

It catalyses the reaction 2 a quinone + NADH + H(+) = 2 a 1,4-benzosemiquinone + NAD(+). It carries out the reaction N,N-dimethyl-1,4-phenylenediamine + anthranilate + 2 NAD(+) = 2-(4-dimethylaminophenyl)diazenylbenzoate + 2 NADH + 2 H(+). Quinone reductase that provides resistance to thiol-specific stress caused by electrophilic quinones. In terms of biological role, also exhibits azoreductase activity. Catalyzes the reductive cleavage of the azo bond in aromatic azo compounds to the corresponding amines. The protein is FMN-dependent NADH:quinone oxidoreductase 4 of Burkholderia lata (strain ATCC 17760 / DSM 23089 / LMG 22485 / NCIMB 9086 / R18194 / 383).